The sequence spans 723 residues: Beta-xylosidase (723 aa).

The first 19 residues, 1–19, serve as a signal peptide directing secretion; it reads MKKLWLMGLLLASFFTTVA.

Belongs to the glycosyl hydrolase 3 family.

It is found in the periplasm. Functionally, xylosidase involved in ulvan degradation. Ulvan is the main polysaccharide component of the Ulvales (green seaweed) cell wall. It is composed of disaccharide building blocks comprising 3-sulfated rhamnose (Rha3S) linked to D-glucuronic acid (GlcA), L-iduronic acid (IduA), or D-xylose (Xyl). Beta-xylosidase converts Xyl-Rha3S, a product of alpha-L-rhamnosidase acting on Rha-Xyl-Rha3S oligosaccharides, further to Xyl and Rha3S. The enzyme is able to degrade 4-methylumbelliferyl-beta-D-xylopyranoside (MUX) in vitro. The protein is Beta-xylosidase of Formosa agariphila (strain DSM 15362 / KCTC 12365 / LMG 23005 / KMM 3901 / M-2Alg 35-1).